The sequence spans 498 residues: NAD(P)H-quinone oxidoreductase chain 4, chloroplastic (498 aa).

14 consecutive transmembrane segments (helical) span residues 4-24 (FPWL…IVLF), 37-57 (YCIC…HFEL), 80-100 (FGID…TTLA), 112-129 (KLFY…LGTF), 134-154 (ILLF…LLSM), 167-187 (FILY…GMSL), 208-228 (ALEI…SPII), 242-262 (HYST…YGLV), 272-292 (AHSI…IYAA), 305-325 (IAYS…SISE), 330-350 (GAIL…FLAG), 386-406 (LALP…GIIT), 416-436 (ILIT…SLSI), and 463-483 (FISI…DFIF).

This sequence belongs to the complex I subunit 4 family.

The protein resides in the plastid. The protein localises to the chloroplast thylakoid membrane. The enzyme catalyses a plastoquinone + NADH + (n+1) H(+)(in) = a plastoquinol + NAD(+) + n H(+)(out). It catalyses the reaction a plastoquinone + NADPH + (n+1) H(+)(in) = a plastoquinol + NADP(+) + n H(+)(out). In Phaseolus vulgaris (Kidney bean), this protein is NAD(P)H-quinone oxidoreductase chain 4, chloroplastic.